Consider the following 1582-residue polypeptide: Nik-related protein kinase (1582 aa).

The Protein kinase domain occupies 25–313; that stretch reads FSLDKTIGLG…SANMLQHPFV (289 aa). ATP-binding positions include 31–39 and Lys54; that span reads IGLGTYGRI. Asp177 functions as the Proton acceptor in the catalytic mechanism. 3 stretches are compositionally biased toward low complexity: residues 492-507, 527-538, and 551-572; these read QVQSQVSKKQQAQTQT, PEQQRQGQAPEQ, and EQNQAPEQPEVQEQAAEPAQAE. A disordered region spans residues 492 to 579; sequence QVQSQVSKKQ…QAETEAEEPE (88 aa). Positions 725-759 form a coiled coil; the sequence is QRRQRRWEDIFNQHEEELRQVDKDKEDESSDNDEV. 2 disordered regions span residues 783 to 859 and 926 to 1156; these read EVQE…PPYS and ASAD…GSGM. Composition is skewed to polar residues over residues 803-814, 825-834, and 850-859; these read FSSSVPQRSLLE, RSSQNRQNWL, and RRSQSSPPYS. Phosphoserine is present on residues Ser852 and Ser855. A compositionally biased stretch (acidic residues) spans 926–944; it reads ASADTDGDDDDESNDTFED. 2 stretches are compositionally biased toward basic and acidic residues: residues 965–978 and 999–1016; these read VCKDHDDDNNKFVD and GSCKQDGYDGSRGKEEAY. Phosphoserine occurs at positions 1027, 1031, and 1034. 2 stretches are compositionally biased toward basic and acidic residues: residues 1043-1061 and 1125-1135; these read QEEHAANIGSERRGSEGDG and PDHESDNKDIS. The segment covering 1136–1154 has biased composition (polar residues); the sequence is ESSTQSDFSANHSSPSKGS. In terms of domain architecture, CNH spans 1209–1552; the sequence is TSEICCGSLW…RFLCTRGDKL (344 aa).

Belongs to the protein kinase superfamily. STE Ser/Thr protein kinase family. STE20 subfamily.

It carries out the reaction L-seryl-[protein] + ATP = O-phospho-L-seryl-[protein] + ADP + H(+). The enzyme catalyses L-threonyl-[protein] + ATP = O-phospho-L-threonyl-[protein] + ADP + H(+). May phosphorylate cofilin-1 and induce actin polymerization through this process, during the late stages of embryogenesis. Involved in the TNF-alpha-induced signaling pathway. This chain is Nik-related protein kinase (NRK), found in Homo sapiens (Human).